Here is a 496-residue protein sequence, read N- to C-terminus: Lysine--tRNA ligase (496 aa).

Positions 409 and 416 each coordinate Mg(2+).

The protein belongs to the class-II aminoacyl-tRNA synthetase family. As to quaternary structure, homodimer. It depends on Mg(2+) as a cofactor.

The protein localises to the cytoplasm. It catalyses the reaction tRNA(Lys) + L-lysine + ATP = L-lysyl-tRNA(Lys) + AMP + diphosphate. In Streptococcus agalactiae serotype III (strain NEM316), this protein is Lysine--tRNA ligase.